The following is an 82-amino-acid chain: Small ribosomal subunit protein bS16 (82 aa).

It belongs to the bacterial ribosomal protein bS16 family.

This Tolumonas auensis (strain DSM 9187 / NBRC 110442 / TA 4) protein is Small ribosomal subunit protein bS16.